A 66-amino-acid chain; its full sequence is DNA-directed RNA polymerase subunit Rpo10 (66 aa).

4 residues coordinate Zn(2+): C7, C10, C44, and C45.

It belongs to the archaeal Rpo10/eukaryotic RPB10 RNA polymerase subunit family. As to quaternary structure, part of the 13-subunit RNA polymerase complex. Requires Zn(2+) as cofactor.

Its subcellular location is the cytoplasm. It catalyses the reaction RNA(n) + a ribonucleoside 5'-triphosphate = RNA(n+1) + diphosphate. Functionally, DNA-dependent RNA polymerase (RNAP) catalyzes the transcription of DNA into RNA using the four ribonucleoside triphosphates as substrates. This Sulfolobus acidocaldarius (strain ATCC 33909 / DSM 639 / JCM 8929 / NBRC 15157 / NCIMB 11770) protein is DNA-directed RNA polymerase subunit Rpo10.